We begin with the raw amino-acid sequence, 287 residues long: Bifunctional protein FolD (287 aa).

NADP(+) contacts are provided by residues 168-170 (GRS), serine 193, and isoleucine 234.

It belongs to the tetrahydrofolate dehydrogenase/cyclohydrolase family. Homodimer.

The catalysed reaction is (6R)-5,10-methylene-5,6,7,8-tetrahydrofolate + NADP(+) = (6R)-5,10-methenyltetrahydrofolate + NADPH. The enzyme catalyses (6R)-5,10-methenyltetrahydrofolate + H2O = (6R)-10-formyltetrahydrofolate + H(+). The protein operates within one-carbon metabolism; tetrahydrofolate interconversion. Functionally, catalyzes the oxidation of 5,10-methylenetetrahydrofolate to 5,10-methenyltetrahydrofolate and then the hydrolysis of 5,10-methenyltetrahydrofolate to 10-formyltetrahydrofolate. In Clostridioides difficile (strain 630) (Peptoclostridium difficile), this protein is Bifunctional protein FolD.